The primary structure comprises 253 residues: MLLIPAIDLKDGHCVRLEQGDMDKATVFSEDPGAMAAHWISKGARRLHLVDLNGAFAGKLKNESAIKSILKAVGNEIPVQLGGGIRDLETIERLLDDGISTVIIGTAAVKNPGFVQDACTAFPGHVMVGLDARDGKVATDGWSKITGHEVIDLAKKFEDWGVEAIIYTDIGRDGMLKGVNIEATMKLAQAIRIPVIASGGLSNNQDIEALCKAEEEGVMGVIAGRSIYAADLDLAAAQKYADELTLKYAKKII.

The active-site Proton acceptor is the Asp8. Residue Asp131 is the Proton donor of the active site.

Belongs to the HisA/HisF family.

The protein localises to the cytoplasm. The catalysed reaction is 1-(5-phospho-beta-D-ribosyl)-5-[(5-phospho-beta-D-ribosylamino)methylideneamino]imidazole-4-carboxamide = 5-[(5-phospho-1-deoxy-D-ribulos-1-ylimino)methylamino]-1-(5-phospho-beta-D-ribosyl)imidazole-4-carboxamide. It functions in the pathway amino-acid biosynthesis; L-histidine biosynthesis; L-histidine from 5-phospho-alpha-D-ribose 1-diphosphate: step 4/9. This is 1-(5-phosphoribosyl)-5-[(5-phosphoribosylamino)methylideneamino] imidazole-4-carboxamide isomerase from Polynucleobacter asymbioticus (strain DSM 18221 / CIP 109841 / QLW-P1DMWA-1) (Polynucleobacter necessarius subsp. asymbioticus).